The following is a 344-amino-acid chain: GTPase Obg (344 aa).

Positions 1–159 (MKFLDLCKVY…RTLWLRLKLI (159 aa)) constitute an Obg domain. The interval 126 to 146 (GNLHFKSSTNQAPRRSNPGQD) is disordered. Residues 130–144 (FKSSTNQAPRRSNPG) are compositionally biased toward polar residues. The region spanning 160-327 (ADVGLLGLPN…VLRKLRGEIS (168 aa)) is the OBG-type G domain. GTP-binding positions include 166-173 (GLPNAGKS), 191-195 (FTTLH), 212-215 (DIPG), 279-282 (NKID), and 308-310 (SGV). Residues serine 173 and threonine 193 each contribute to the Mg(2+) site.

This sequence belongs to the TRAFAC class OBG-HflX-like GTPase superfamily. OBG GTPase family. As to quaternary structure, monomer. Mg(2+) is required as a cofactor.

It is found in the cytoplasm. Its function is as follows. An essential GTPase which binds GTP, GDP and possibly (p)ppGpp with moderate affinity, with high nucleotide exchange rates and a fairly low GTP hydrolysis rate. Plays a role in control of the cell cycle, stress response, ribosome biogenesis and in those bacteria that undergo differentiation, in morphogenesis control. The chain is GTPase Obg from Roseobacter denitrificans (strain ATCC 33942 / OCh 114) (Erythrobacter sp. (strain OCh 114)).